We begin with the raw amino-acid sequence, 686 residues long: Envelope glycoprotein H (686 aa).

A signal peptide spans 1–24; that stretch reads MPASSVRLPLRLLTLAGLLALAGA. At 25–646 the chain is on the virion surface side; the sequence is AALARGAPQG…TSTRLAPVSP (622 aa). N-linked (GlcNAc...) asparagine; by host glycosylation is found at asparagine 77, asparagine 162, asparagine 542, asparagine 604, and asparagine 627. Positions 157–217 are interaction with gL; it reads PAAVFNVTLG…PPAGRFHVYT (61 aa). Residues 647 to 667 form a helical membrane-spanning segment; sequence AYVVASVVGAAITVGILYALF. The Intravirion portion of the chain corresponds to 668-686; it reads KMLCSFSSEGYSRLINARS.

Belongs to the herpesviridae glycoprotein H family. Interacts with glycoprotein L (gL); this interaction is necessary for the correct processing and cell surface expression of gH. The heterodimer gH/gL seems to interact with gB trimers during fusion. In terms of processing, N-glycosylated, O-glycosylated, and sialylated.

It localises to the virion membrane. Its subcellular location is the host cell membrane. The protein localises to the host endosome membrane. Its function is as follows. The heterodimer glycoprotein H-glycoprotein L is required for the fusion of viral and plasma membranes leading to virus entry into the host cell. Following initial binding to host receptor, membrane fusion is mediated by the fusion machinery composed of gB and the heterodimer gH/gL. May also be involved in the fusion between the virion envelope and the outer nuclear membrane during virion morphogenesis. The polypeptide is Envelope glycoprotein H (Sus scrofa (Pig)).